Reading from the N-terminus, the 165-residue chain is Thiol peroxidase (165 aa).

The Thioredoxin domain maps to 18–164; the sequence is RKVGDKAPNF…YEAAIEAAKK (147 aa). C60 (cysteine sulfenic acid (-SOH) intermediate) is an active-site residue. An intrachain disulfide couples C60 to C94.

The protein belongs to the peroxiredoxin family. Tpx subfamily. In terms of assembly, homodimer.

It catalyses the reaction a hydroperoxide + [thioredoxin]-dithiol = an alcohol + [thioredoxin]-disulfide + H2O. Thiol-specific peroxidase that catalyzes the reduction of hydrogen peroxide and organic hydroperoxides to water and alcohols, respectively. Plays a role in cell protection against oxidative stress by detoxifying peroxides. This is Thiol peroxidase from Listeria monocytogenes serotype 4b (strain F2365).